The chain runs to 500 residues: Glucose-6-phosphate 1-dehydrogenase (500 aa).

Residues 18–25, arginine 52, and lysine 155 each bind NADP(+); that span reads GASGDLSK. Residues lysine 155, 185 to 189, glutamate 223, and aspartate 242 contribute to the D-glucose 6-phosphate site; that span reads HYLGK. Histidine 247 functions as the Proton acceptor in the catalytic mechanism. NADP(+) is bound at residue lysine 338. Lysine 341 lines the D-glucose 6-phosphate pocket. The NADP(+) site is built by lysine 347, arginine 351, and arginine 373. A D-glucose 6-phosphate-binding site is contributed by glutamine 375. Residues 381–383, 401–403, and tyrosine 483 each bind NADP(+); these read YFK and DLT.

This sequence belongs to the glucose-6-phosphate dehydrogenase family.

It is found in the cytoplasm. It localises to the cytosol. The enzyme catalyses D-glucose 6-phosphate + NADP(+) = 6-phospho-D-glucono-1,5-lactone + NADPH + H(+). It participates in carbohydrate degradation; pentose phosphate pathway; D-ribulose 5-phosphate from D-glucose 6-phosphate (oxidative stage): step 1/3. In terms of biological role, catalyzes the rate-limiting step of the oxidative pentose-phosphate pathway, which represents a route for the dissimilation of carbohydrates besides glycolysis. The main function of this enzyme is to provide reducing power (NADPH) and pentose phosphates for fatty acid and nucleic acid synthesis. The polypeptide is Glucose-6-phosphate 1-dehydrogenase (Schizosaccharomyces pombe (strain 972 / ATCC 24843) (Fission yeast)).